Here is a 143-residue protein sequence, read N- to C-terminus: Large ribosomal subunit protein uL13 (143 aa).

Belongs to the universal ribosomal protein uL13 family. In terms of assembly, part of the 50S ribosomal subunit.

In terms of biological role, this protein is one of the early assembly proteins of the 50S ribosomal subunit, although it is not seen to bind rRNA by itself. It is important during the early stages of 50S assembly. In Coprothermobacter proteolyticus (strain ATCC 35245 / DSM 5265 / OCM 4 / BT), this protein is Large ribosomal subunit protein uL13.